A 176-amino-acid polypeptide reads, in one-letter code: UBA-like domain-containing protein 1 (176 aa).

Composition is skewed to low complexity over residues 88 to 105 (ESFH…TSAT) and 120 to 137 (TPSW…QHLQ). The tract at residues 88 to 176 (ESFHSGGSSG…RAHPAMEAER (89 aa)) is disordered. Pro residues predominate over residues 138 to 150 (PQPPLWTPAPPSP). The span at 166-176 (PRAHPAMEAER) shows a compositional bias: basic and acidic residues.

It belongs to the UBALD family.

The protein is UBA-like domain-containing protein 1 (Ubald1) of Rattus norvegicus (Rat).